Consider the following 87-residue polypeptide: Small ribosomal subunit protein uS15 (87 aa).

Belongs to the universal ribosomal protein uS15 family. As to quaternary structure, part of the 30S ribosomal subunit. Forms a bridge to the 50S subunit in the 70S ribosome, contacting the 23S rRNA.

One of the primary rRNA binding proteins, it binds directly to 16S rRNA where it helps nucleate assembly of the platform of the 30S subunit by binding and bridging several RNA helices of the 16S rRNA. Its function is as follows. Forms an intersubunit bridge (bridge B4) with the 23S rRNA of the 50S subunit in the ribosome. This is Small ribosomal subunit protein uS15 from Dehalococcoides mccartyi (strain ATCC BAA-2100 / JCM 16839 / KCTC 5957 / BAV1).